The primary structure comprises 410 residues: Platelet-activating factor acetylhydrolase IB subunit alpha (410 aa).

The tract at residues 1-38 is required for self-association and interaction with PAFAH1B2 and PAFAH1B3; the sequence is MVLSQRQRDELNRAIADYLRSNGYEEAYSVFKKEAELD. Residues 1–66 form an interaction with NDE1 region; that stretch reads MVLSQRQRDE…SVIRLQKKVM (66 aa). The interaction with NDEL1 stretch occupies residues 1–102; the sequence is MVLSQRQRDE…EWIPRPPEKY (102 aa). The LisH domain maps to 7–39; that stretch reads QRDELNRAIADYLRSNGYEEAYSVFKKEAELDM. K53 carries the post-translational modification N6-acetyllysine. Residues 56-82 are a coiled coil; the sequence is TSVIRLQKKVMELESKLNEAKEEFTSG. The segment at 83-410 is interaction with dynein and dynactin; that stretch reads GPLGQKRDPK…DQTVKVWECR (328 aa). 7 WD repeats span residues 106–147, 148–187, 190–229, 232–271, 274–333, 336–377, and 379–410; these read GHRS…RTLK, GHTDSVQDISFDHSGKLLASCSADMTIKLWDFQGFECIRT, GHDHNVSSVAIMPNGDHIVSASRDKTIKMWEVQTGYCVKT, GHREWVRMVRPNQDGTLIASCSNDQTVRVWVVATKECKAE, EHEH…CLMT, GHDN…KTLN, and HEHFVTSLDFHKTAPYVVTGFVDQTVKVWECR. S109 is modified (phosphoserine). Positions 367–409 are interaction with DCX; that stretch reads YKNKRCMKTLNAHEHFVTSLDFHKTAPYVVTGFVDQTVKVWEC. An interaction with NDEL1 region spans residues 388–410; the sequence is FHKTAPYVVTGFVDQTVKVWECR.

This sequence belongs to the WD repeat LIS1/nudF family. As to quaternary structure, can self-associate. Component of the cytosolic PAF-AH (I) heterotetrameric enzyme, which is composed of PAFAH1B1 (beta), PAFAH1B2 (alpha2) and PAFAH1B3 (alpha1) subunits. The catalytic activity of the enzyme resides in the alpha1 (PAFAH1B3) and alpha2 (PAFAH1B2) subunits, whereas the beta subunit (PAFAH1B1) has regulatory activity. Trimer formation is not essential for the catalytic activity. Interacts with the catalytic dimer of PAF-AH (I) heterotetrameric enzyme: interacts with PAFAH1B2 homodimer (alpha2/alpha2 homodimer), PAFAH1B3 homodimer (alpha1/alpha1 homodimer) and PAFAH1B2-PAFAH1B3 heterodimer (alpha2/alpha1 heterodimer). Interacts with DCX, dynein, dynactin, IQGAP1, KATNB1, NDE1, NDEL1, NUDC and RSN. Interacts with DISC1, and this interaction is enhanced by NDEL1. Interacts with DAB1 when DAB1 is phosphorylated in response to RELN/reelin signaling. Interacts with INTS13. Interacts with DCDC1.

The protein resides in the cytoplasm. The protein localises to the cytoskeleton. Its subcellular location is the microtubule organizing center. It is found in the centrosome. It localises to the spindle. The protein resides in the nucleus membrane. Its function is as follows. Regulatory subunit (beta subunit) of the cytosolic type I platelet-activating factor (PAF) acetylhydrolase (PAF-AH (I)), an enzyme that catalyzes the hydrolyze of the acetyl group at the sn-2 position of PAF and its analogs and participates in PAF inactivation. Regulates the PAF-AH (I) activity in a catalytic dimer composition-dependent manner. Positively regulates the activity of the minus-end directed microtubule motor protein dynein. May enhance dynein-mediated microtubule sliding by targeting dynein to the microtubule plus end. Required for several dynein- and microtubule-dependent processes such as the maintenance of Golgi integrity, the peripheral transport of microtubule fragments and the coupling of the nucleus and centrosome. Required during brain development for the proliferation of neuronal precursors and the migration of newly formed neurons from the ventricular/subventricular zone toward the cortical plate. Neuronal migration involves a process called nucleokinesis, whereby migrating cells extend an anterior process into which the nucleus subsequently translocates. During nucleokinesis dynein at the nuclear surface may translocate the nucleus towards the centrosome by exerting force on centrosomal microtubules. Also required for proper activation of Rho GTPases and actin polymerization at the leading edge of locomoting cerebellar neurons and postmigratory hippocampal neurons in response to calcium influx triggered via NMDA receptors. May also play a role in other forms of cell locomotion including the migration of fibroblasts during wound healing. Required for dynein recruitment to microtubule plus ends and BICD2-bound cargos. May modulate the Reelin pathway through interaction of the PAF-AH (I) catalytic dimer with VLDLR. This Pan troglodytes (Chimpanzee) protein is Platelet-activating factor acetylhydrolase IB subunit alpha.